The chain runs to 207 residues: Small ribosomal subunit protein uS4c (207 aa).

The interval 22 to 51 (TQKNCTRDFPPGQHGPKKKGGGNQKTKESQ) is disordered. The S4 RNA-binding domain occupies 97-158 (MRLDTIIFRL…NSQNFVKNLL (62 aa)).

Belongs to the universal ribosomal protein uS4 family. Part of the 30S ribosomal subunit. Contacts protein S5. The interaction surface between S4 and S5 is involved in control of translational fidelity.

Its subcellular location is the plastid. It localises to the chloroplast. One of the primary rRNA binding proteins, it binds directly to 16S rRNA where it nucleates assembly of the body of the 30S subunit. In terms of biological role, with S5 and S12 plays an important role in translational accuracy. This is Small ribosomal subunit protein uS4c (rps4) from Chlorella vulgaris (Green alga).